Consider the following 624-residue polypeptide: LRR receptor kinase BAK1 (624 aa).

The first 25 residues, 1–25, serve as a signal peptide directing secretion; sequence MAAHRWAVWAVLLLRLLVPAARVLA. Residues 26–237 are Extracellular-facing; it reads NMEGDALHSL…QSPGSSSSTG (212 aa). LRR repeat units follow at residues 91–115, 117–139, 140–163, and 164–188; these read LKNL…LGNL, NLVS…LGNL, LKLR…LTAI, and TALQ…SFSL. 5 N-linked (GlcNAc...) asparagine glycosylation sites follow: N103, N114, N127, N149, and N175. The disordered stretch occupies residues 205–236; that stretch reads TTKPCPGAPPFSPPPPYNPPTPVQSPGSSSST. Residues 210–227 are compositionally biased toward pro residues; the sequence is PGAPPFSPPPPYNPPTPV. A helical membrane pass occupies residues 238-258; that stretch reads AIAGGVAAGAALLFAIPAIGF. The Cytoplasmic portion of the chain corresponds to 259–624; that stretch reads AWYRRRKPQE…LHAVELSGPR (366 aa). Positions 301–588 constitute a Protein kinase domain; it reads FSNKNILGRG…GLAERWEEWQ (288 aa). ATP contacts are provided by residues 307–315 and K329; that span reads LGRGGFGKV. D428 serves as the catalytic Proton acceptor.

Belongs to the protein kinase superfamily. Ser/Thr protein kinase family. In terms of assembly, forms homodimers. Interacts with BRI1. Interacts with REM4.1. In terms of tissue distribution, expressed in developing lateral roots, shoot apex, leaf blades, lamina joints and flowers. Expressed at low levels in leaf sheaths and panicles.

The protein resides in the cell membrane. It catalyses the reaction L-seryl-[protein] + ATP = O-phospho-L-seryl-[protein] + ADP + H(+). It carries out the reaction L-threonyl-[protein] + ATP = O-phospho-L-threonyl-[protein] + ADP + H(+). Its function is as follows. LRR receptor kinase involved in defense response. Does not seem to be required specifically for XA21-mediated immunity or basal resistance to Xanthomonas oryzae pv. oryzae (Xoo), or immunity to Magnaporthe oryzae. Involved in brassinosteroid (BR) signaling pathway. Acts as a coreceptor of BRI1. Forms at the plasma membrane a receptor complex with BRI1 which is activated in response to brassinolide. Phosphorylates BRI1. Required for normal plant growth and leaf development. Possesses kinase activity in vitro. In Oryza sativa subsp. japonica (Rice), this protein is LRR receptor kinase BAK1.